The primary structure comprises 153 residues: Ribonuclease H (153 aa).

The RNase H type-1 domain occupies 1–142 (MTPEVVIYTD…ADALARKGLS (142 aa)). Positions 10, 48, 70, and 134 each coordinate Mg(2+).

Belongs to the RNase H family. In terms of assembly, monomer. Requires Mg(2+) as cofactor.

The protein localises to the cytoplasm. The enzyme catalyses Endonucleolytic cleavage to 5'-phosphomonoester.. Endonuclease that specifically degrades the RNA of RNA-DNA hybrids. The protein is Ribonuclease H of Phenylobacterium zucineum (strain HLK1).